The primary structure comprises 102 residues: Large ribosomal subunit protein bL21 (102 aa).

This sequence belongs to the bacterial ribosomal protein bL21 family. In terms of assembly, part of the 50S ribosomal subunit. Contacts protein L20.

In terms of biological role, this protein binds to 23S rRNA in the presence of protein L20. The sequence is that of Large ribosomal subunit protein bL21 from Nocardioides sp. (strain ATCC BAA-499 / JS614).